The primary structure comprises 873 residues: Paramyosin (873 aa).

The interval 1 to 25 is nonhelical region; sequence MSSRSSKYMYKSSGGAGDISIEYGT. A coiled-coil region spans residues 26 to 852; sequence DLGALTRLED…IRAKHRSWVT (827 aa). The nonhelical region stretch occupies residues 853–873; that stretch reads TSQVPGGTRQVFVTEESSQNF.

This sequence belongs to the paramyosin family. Homodimer. Binds IgG and collagen. In terms of tissue distribution, expressed in all tissues except in saliva.

The protein localises to the cytoplasm. It is found in the myofibril. In terms of biological role, paramyosin is a major structural component of many thick filaments isolated from invertebrate muscles. The sequence is that of Paramyosin (PRM) from Rhipicephalus microplus (Cattle tick).